A 255-amino-acid polypeptide reads, in one-letter code: (R)-S-adenosyl-L-methionine hydrolase (255 aa).

Adenosine-binding residues include Asp9, Asp70, and Asn186. The (R)-S-adenosyl-L-methionine site is built by Asn186, Ser227, Glu232, and Val235. Val235 contacts adenosine.

It belongs to the SAM hydrolase / SAM-dependent halogenase family. As to quaternary structure, homotrimer.

The enzyme catalyses (R)-S-adenosyl-L-methionine + H2O = adenosine + L-methionine + H(+). Catalyzes the hydrolysis of S-adenosyl-L-methionine (SAM) into adenosine and L-methionine. Does not have chlorinase or fluorinase activity. The chain is (R)-S-adenosyl-L-methionine hydrolase from Thermus thermophilus (strain ATCC 27634 / DSM 579 / HB8).